A 362-amino-acid polypeptide reads, in one-letter code: 3-dehydroquinate synthase (362 aa).

NAD(+)-binding positions include 71-76, 105-109, 129-130, Lys-142, Lys-151, and 169-172; these read DGEQYK, GVVGD, TT, and CLKT. Zn(2+) contacts are provided by Glu-184, His-247, and His-264.

It belongs to the sugar phosphate cyclases superfamily. Dehydroquinate synthase family. Co(2+) is required as a cofactor. It depends on Zn(2+) as a cofactor. NAD(+) serves as cofactor.

The protein resides in the cytoplasm. It carries out the reaction 7-phospho-2-dehydro-3-deoxy-D-arabino-heptonate = 3-dehydroquinate + phosphate. Its pathway is metabolic intermediate biosynthesis; chorismate biosynthesis; chorismate from D-erythrose 4-phosphate and phosphoenolpyruvate: step 2/7. In terms of biological role, catalyzes the conversion of 3-deoxy-D-arabino-heptulosonate 7-phosphate (DAHP) to dehydroquinate (DHQ). This chain is 3-dehydroquinate synthase, found in Escherichia coli O6:K15:H31 (strain 536 / UPEC).